Reading from the N-terminus, the 327-residue chain is GTPase Obg (327 aa).

An Obg domain is found at 2-160 (HLFKDSLNLI…LNLRLELSLI (159 aa)). Residues 161–326 (ADVGLVGLPN…LVSEFFSLAK (166 aa)) enclose the OBG-type G domain. GTP-binding positions include 167 to 174 (GLPNAGKS), 192 to 196 (FTTKI), 213 to 216 (DLPG), 280 to 283 (SKLD), and 307 to 309 (SIY). Mg(2+) is bound by residues serine 174 and threonine 194.

Belongs to the TRAFAC class OBG-HflX-like GTPase superfamily. OBG GTPase family. Monomer. Requires Mg(2+) as cofactor.

The protein localises to the cytoplasm. Its function is as follows. An essential GTPase which binds GTP, GDP and possibly (p)ppGpp with moderate affinity, with high nucleotide exchange rates and a fairly low GTP hydrolysis rate. Plays a role in control of the cell cycle, stress response, ribosome biogenesis and in those bacteria that undergo differentiation, in morphogenesis control. The chain is GTPase Obg from Borrelia recurrentis (strain A1).